The following is an 841-amino-acid chain: Toll-like receptor 4 (841 aa).

The N-terminal stretch at 1–23 is a signal peptide; the sequence is MMARVRLAAALIPATAILSCLRT. The Extracellular portion of the chain corresponds to 24–632; the sequence is ESWDPCVQVV…FRNATCQMSK (609 aa). The cysteines at positions 29 and 40 are disulfide-linked. N-linked (GlcNAc...) asparagine glycans are attached at residues Asn-35 and Asn-73. LRR repeat units lie at residues 55 to 76, 79 to 100, 103 to 124, 127 to 148, 151 to 172, 176 to 197, and 205 to 225; these read STKM…NFSS, ELQV…TFQG, HLST…AFSG, SLQK…PIGH, TLKE…EYFS, NLEH…DVKV, and NLSL…TFKE. N-linked (GlcNAc...) asparagine glycans are attached at residues Asn-205, Asn-238, Asn-282, and Asn-309. A disulfide bond links Cys-281 and Cys-306. LRR repeat units lie at residues 352-373, 374-395, 400-422, 423-444, 448-469, 472-495, 497-518, 521-542, and 545-568; these read SLKK…FQLP, SLQY…SHAD, NLKH…MGLE, KLEH…SVFL, NLRY…IFTG, SLKT…FTEL, NLTV…AFHS, SLQV…LYEP, and LLRI…QNLP. Cys-390 and Cys-391 are disulfide-bonded. N-linked (GlcNAc...) asparagine glycans are attached at residues Asn-497 and Asn-526. N-linked (GlcNAc...) asparagine glycans are attached at residues Asn-570 and Asn-575. The LRRCT domain maps to 579–630; that stretch reads NAFACVCEHQRFLQWVKDQRQLLVGAEQMMCAEPLDMKDMPVLSFRNATCQM. Intrachain disulfides connect Cys-583–Cys-609 and Cys-585–Cys-628. The N-linked (GlcNAc...) asparagine glycan is linked to Asn-625. The chain crosses the membrane as a helical span at residues 633-653; the sequence is MIISVSVVTVLLVSVVGVLVY. The Cytoplasmic portion of the chain corresponds to 654–841; the sequence is KFYFHLMLLA…TNPQEATTST (188 aa). Residues 673–816 form the TIR domain; that stretch reads STYGAFVIYS…VFWRRLRKAL (144 aa). Positions 820-841 are disordered; it reads KPQSPEGTADAETNPQEATTST. Residues 830–841 are compositionally biased toward polar residues; sequence AETNPQEATTST.

Belongs to the Toll-like receptor family. Belongs to the lipopolysaccharide (LPS) receptor, a multi-protein complex containing at least CD14, LY96 and TLR4. Binding to bacterial LPS leads to homodimerization. Interacts with LY96 via the extracellular domain. Interacts with MYD88 and TIRAP via their respective TIR domains. Interacts with TICAM2. Interacts with NOX4. Interacts with CNPY3 and HSP90B1; this interaction is required for proper folding in the endoplasmic reticulum. Interacts with MAP3K21; this interaction leads to negative regulation of TLR4 signaling. Interacts with CD36, following CD36 stimulation by oxLDL or amyloid-beta 42, and forms a heterodimer with TLR6. The trimeric complex is internalized and triggers inflammatory response. LYN kinase activity facilitates TLR4-TLR6 heterodimerization and signal initiation. Interacts with TICAM1 in response to LPS in a WDFY1-dependent manner. Interacts with WDFY1 in response to LPS. Interacts with SMPDL3B. Interacts with CEACAM1; upon lipopolysaccharide stimulation, forms a complex including TLR4 and the phosphorylated form of SYK and CEACAM1, which in turn, recruits PTPN6 that dephosphorylates SYK, reducing the production of reactive oxygen species (ROS) and lysosome disruption, which in turn, reduces the activity of the inflammasome. Interacts with RFTN1; the interaction occurs in response to lipopolysaccharide stimulation. Interacts with SCIMP; the interaction occurs in response to lipopolysaccharide stimulation and is enhanced by phosphorylation of SCIMP by LYN. This interaction facilitates the phosphorylation of TLR4 by LYN which elicits a selective cytokine response in macrophages. Interacts with TRAF3IP3. Interacts with TREM1; this interaction enhances TLR4-mediated inflammatory response. Interacts with ZG16B/PAUF. Interacts with CD82; this interaction inhibits TLR4-mediated signaling pathway. Post-translationally, phosphorylated on tyrosine residues by LYN after binding lipopolysaccharide. Ubiquitinated by RNF128 via 'Lys-28'-linked polyubiquitin chains, leading to proteasomal degradation.

It localises to the cell membrane. Its subcellular location is the early endosome. It is found in the cell projection. The protein localises to the ruffle. Its function is as follows. Transmembrane receptor that functions as a pattern recognition receptor recognizing pathogen- and damage-associated molecular patterns (PAMPs and DAMPs) to induce innate immune responses via downstream signaling pathways. At the plasma membrane, cooperates with LY96 to mediate the innate immune response to bacterial lipopolysaccharide (LPS). Also involved in LPS-independent inflammatory responses triggered by free fatty acids, such as palmitate, and Ni(2+). Mechanistically, acts via MYD88, TIRAP and TRAF6, leading to NF-kappa-B activation, cytokine secretion and the inflammatory response. Alternatively, CD14-mediated TLR4 internalization via endocytosis is associated with the initiation of a MYD88-independent signaling via the TICAM1-TBK1-IRF3 axis leading to type I interferon production. In addition to the secretion of proinflammatory cytokines, initiates the activation of NLRP3 inflammasome and formation of a positive feedback loop between autophagy and NF-kappa-B signaling cascade. In complex with TLR6, promotes inflammation in monocytes/macrophages by associating with TLR6 and the receptor CD86. Upon ligand binding, such as oxLDL or amyloid-beta 42, the TLR4:TLR6 complex is internalized and triggers inflammatory response, leading to NF-kappa-B-dependent production of CXCL1, CXCL2 and CCL9 cytokines, via MYD88 signaling pathway, and CCL5 cytokine, via TICAM1 signaling pathway. In myeloid dendritic cells, vesicular stomatitis virus glycoprotein G but not LPS promotes the activation of IRF7, leading to type I IFN production in a CD14-dependent manner. This is Toll-like receptor 4 (TLR4) from Boselaphus tragocamelus (Nilgai).